A 263-amino-acid polypeptide reads, in one-letter code: MSTSIKAIKESLEAVTSLLDPLFQELATDARLGVQKALKSRQKAIQADLAEEERLEAMLSYEKALYKEGYQAIAGIDEVGRGPLAGPVVAACVILPQHCKIKGLNDSKKIPKSKHETIYQAVKEKALAIGIGIIDNQLIDEVNIYEATKLAMLEAIKQLEGQLTQPDYLLIDAMTLDIAISQQSILKGDANSLSIAAASIVAKVTRDQMMANYDRIFPGYGFAKNAGYGTKEHLQGLKAYGITPIHRKSFEPVKSMCCNSTNP.

An RNase H type-2 domain is found at 71-262 (QAIAGIDEVG…VKSMCCNSTN (192 aa)). Aspartate 77, glutamate 78, and aspartate 172 together coordinate a divalent metal cation.

It belongs to the RNase HII family. Mn(2+) serves as cofactor. Mg(2+) is required as a cofactor.

It is found in the cytoplasm. The enzyme catalyses Endonucleolytic cleavage to 5'-phosphomonoester.. Its function is as follows. Endonuclease that specifically degrades the RNA of RNA-DNA hybrids. In Streptococcus pyogenes serotype M2 (strain MGAS10270), this protein is Ribonuclease HII.